The chain runs to 370 residues: Protein phosphatase 2C homolog 2 (370 aa).

The PPM-type phosphatase domain occupies 23 to 291 (HFGVSHMQGW…DNMTICIVAF (269 aa)). D63, G64, D233, and D282 together coordinate Mn(2+). Phosphoserine is present on residues S355 and S357.

It belongs to the PP2C family. In terms of assembly, monomer. The cofactor is Mg(2+). Mn(2+) serves as cofactor.

Its subcellular location is the nucleus. The protein resides in the cytoplasm. The protein localises to the cytosol. The catalysed reaction is O-phospho-L-seryl-[protein] + H2O = L-seryl-[protein] + phosphate. It catalyses the reaction O-phospho-L-threonyl-[protein] + H2O = L-threonyl-[protein] + phosphate. Its activity is regulated as follows. Activity is reduced when phosphosrylated at Ser-355/Ser-357. In terms of biological role, dephosphorylating regulator for many key proteins. Has an important role in osmotic stability and cell shape control. It may negatively regulate the osmosensing signal transmitted through wis1 map kinase. The protein is Protein phosphatase 2C homolog 2 (ptc2) of Schizosaccharomyces pombe (strain 972 / ATCC 24843) (Fission yeast).